Consider the following 179-residue polypeptide: Coatomer subunit zeta-2 (179 aa).

It belongs to the adaptor complexes small subunit family. As to quaternary structure, oligomeric complex that consists of at least the alpha, beta, beta', gamma, delta, epsilon and zeta subunits.

The protein localises to the cytoplasm. The protein resides in the golgi apparatus membrane. It is found in the cytoplasmic vesicle. It localises to the COPI-coated vesicle membrane. The coatomer is a cytosolic protein complex that binds to dilysine motifs and reversibly associates with Golgi non-clathrin-coated vesicles, which further mediate biosynthetic protein transport from the ER, via the Golgi up to the trans Golgi network. Coatomer complex is required for budding from Golgi membranes, and is essential for the retrograde Golgi-to-ER transport of dilysine-tagged proteins. The zeta subunit may be involved in regulating the coat assembly and, hence, the rate of biosynthetic protein transport due to its association-dissociation properties with the coatomer complex. This is Coatomer subunit zeta-2 from Arabidopsis thaliana (Mouse-ear cress).